Consider the following 469-residue polypeptide: Probable Xaa-Pro aminopeptidase AN0832 (469 aa).

The Mn(2+) site is built by Asp260, Asp271, Glu398, and Glu437.

This sequence belongs to the peptidase M24B family. It depends on Mn(2+) as a cofactor.

The enzyme catalyses Release of any N-terminal amino acid, including proline, that is linked to proline, even from a dipeptide or tripeptide.. In terms of biological role, catalyzes the removal of a penultimate prolyl residue from the N-termini of peptides. The sequence is that of Probable Xaa-Pro aminopeptidase AN0832 from Emericella nidulans (strain FGSC A4 / ATCC 38163 / CBS 112.46 / NRRL 194 / M139) (Aspergillus nidulans).